The chain runs to 407 residues: Arginine biosynthesis bifunctional protein ArgJ (407 aa).

Substrate-binding residues include Thr157, Lys183, Thr194, Glu280, Asn402, and Thr407. Thr194 (nucleophile) is an active-site residue.

Belongs to the ArgJ family. In terms of assembly, heterotetramer of two alpha and two beta chains.

It localises to the cytoplasm. The enzyme catalyses N(2)-acetyl-L-ornithine + L-glutamate = N-acetyl-L-glutamate + L-ornithine. It catalyses the reaction L-glutamate + acetyl-CoA = N-acetyl-L-glutamate + CoA + H(+). It participates in amino-acid biosynthesis; L-arginine biosynthesis; L-ornithine and N-acetyl-L-glutamate from L-glutamate and N(2)-acetyl-L-ornithine (cyclic): step 1/1. It functions in the pathway amino-acid biosynthesis; L-arginine biosynthesis; N(2)-acetyl-L-ornithine from L-glutamate: step 1/4. Its function is as follows. Catalyzes two activities which are involved in the cyclic version of arginine biosynthesis: the synthesis of N-acetylglutamate from glutamate and acetyl-CoA as the acetyl donor, and of ornithine by transacetylation between N(2)-acetylornithine and glutamate. The polypeptide is Arginine biosynthesis bifunctional protein ArgJ (Bacillus cereus (strain ATCC 10987 / NRS 248)).